The following is a 383-amino-acid chain: Transcription termination factor Rho (383 aa).

Positions 1–22 (MTIETTTKKRPRAARPPRPRES) are disordered. Positions 8–17 (KKRPRAARPP) are enriched in basic residues. The 68-residue stretch at 26 to 93 (LETVAGLLDV…AEVESVNGST (68 aa)) folds into the Rho RNA-BD domain. Residues 132-137 (GKGQRG), 144-149 (KAGKTM), and Arg-175 each bind ATP.

This sequence belongs to the Rho family. As to quaternary structure, homohexamer. The homohexamer assembles into an open ring structure.

Facilitates transcription termination by a mechanism that involves Rho binding to the nascent RNA, activation of Rho's RNA-dependent ATPase activity, and release of the mRNA from the DNA template. This chain is Transcription termination factor Rho, found in Streptosporangium roseum (strain ATCC 12428 / DSM 43021 / JCM 3005 / KCTC 9067 / NCIMB 10171 / NRRL 2505 / NI 9100).